Consider the following 1961-residue polypeptide: Myosin-9 (1961 aa).

A2 carries the post-translational modification N-acetylalanine. Positions 2 to 838 are mediates interaction with LIMCH1; sequence AQQAADKYLY…RLFTKVKPLL (837 aa). N6-acetyllysine is present on K8. Y11 is subject to Phosphotyrosine. The region spanning 27–77 is the Myosin N-terminal SH3-like domain; the sequence is GAKKLVWVPSTKNGFEPASLKEEVGEEAIVELVENGKKVKVNKDDIQKMNP. A Myosin motor domain is found at 81–776; the sequence is SKVEDMAELT…VLAHLEEERD (696 aa). An N6-acetyllysine modification is found at K102. 174-181 serves as a coordination point for ATP; the sequence is GESGAGKT. K299, K435, and K613 each carry N6-acetyllysine. S628 carries the post-translational modification Phosphoserine. The interval 654 to 676 is actin-binding; that stretch reads LAKLMATLRNTNPNFVCCIIPNH. Phosphotyrosine is present on Y754. One can recognise an IQ domain in the interval 779–808; that stretch reads ITDVIIGFQACCRGYLARKAFAKRQQQLTA. A coiled-coil region spans residues 841 to 1927; the sequence is IRHEDELLAK…LKNKLRRGDM (1087 aa). The residue at position 850 (K850) is an N6-succinyllysine. 3 positions are modified to N6-acetyllysine: K860, K975, and K1024. Basic and acidic residues predominate over residues 1035 to 1055; the sequence is RLRREEKQRQELEKTRRKLEG. Residues 1035 to 1057 are disordered; that stretch reads RLRREEKQRQELEKTRRKLEGDS. S1114 is modified (phosphoserine). Residues K1234 and K1249 each carry the N6-acetyllysine modification. A disordered region spans residues 1331–1353; sequence LKQMEDEKNSFREQLEEEEEEAK. Positions 1332–1344 are enriched in basic and acidic residues; the sequence is KQMEDEKNSFREQ. Residues K1358, K1393, K1405, K1411, K1460, and K1639 each carry the N6-acetyllysine modification. An N6-succinyllysine modification is found at K1670. The residue at position 1715 (S1715) is a Phosphoserine. An N6-acetyllysine mark is found at K1794, K1803, and K1846. The disordered stretch occupies residues 1878–1910; it reads RQLEEAEEEAQRANASRRKLQRELEDATETADA. R1924 carries the post-translational modification Omega-N-methylarginine. Residues 1938–1961 form a disordered region; it reads KGTGDCSDEEVDGKADGADAKATE. S1944 is subject to Phosphoserine. Positions 1949 to 1961 are enriched in basic and acidic residues; that stretch reads DGKADGADAKATE.

Belongs to the TRAFAC class myosin-kinesin ATPase superfamily. Myosin family. In terms of assembly, myosin is a hexameric protein that consists of 2 heavy chain subunits (MHC), 2 alkali light chain subunits (MLC) and 2 regulatory light chain subunits (MLC-2). Interacts with RASIP1. Interacts with DDR1. Interacts with PDLIM2. Interacts with SVIL. Interacts with HTRA3. Interacts with Myo7a. Interacts with CFAP95. Interacts with LIMCH1; independently of the integration of MYH9 into the myosin complex. Interacts with RAB3A. Interacts with ZBED4. Interacts with S100A4; this interaction increases cell motility. Post-translationally, ISGylated. In terms of processing, ubiquitination.

It is found in the cytoplasm. The protein resides in the cytoskeleton. The protein localises to the cell cortex. It localises to the cytoplasmic vesicle. Its subcellular location is the secretory vesicle. It is found in the cortical granule. Its function is as follows. Cellular myosin that appears to play a role in cytokinesis, cell shape, and specialized functions such as secretion and capping. Required for cortical actin clearance prior to oocyte exocytosis. Promotes cell motility in conjunction with S100A4. During cell spreading, plays an important role in cytoskeleton reorganization, focal contact formation (in the margins but not the central part of spreading cells), and lamellipodial retraction; this function is mechanically antagonized by MYH10. The sequence is that of Myosin-9 (Myh9) from Rattus norvegicus (Rat).